A 295-amino-acid polypeptide reads, in one-letter code: 4-diphosphocytidyl-2-C-methyl-D-erythritol kinase (295 aa).

Lys-15 is a catalytic residue. Pro-102–Ser-112 lines the ATP pocket. Residue Asp-144 is part of the active site.

It belongs to the GHMP kinase family. IspE subfamily.

It catalyses the reaction 4-CDP-2-C-methyl-D-erythritol + ATP = 4-CDP-2-C-methyl-D-erythritol 2-phosphate + ADP + H(+). Its pathway is isoprenoid biosynthesis; isopentenyl diphosphate biosynthesis via DXP pathway; isopentenyl diphosphate from 1-deoxy-D-xylulose 5-phosphate: step 3/6. Its function is as follows. Catalyzes the phosphorylation of the position 2 hydroxy group of 4-diphosphocytidyl-2C-methyl-D-erythritol. This is 4-diphosphocytidyl-2-C-methyl-D-erythritol kinase from Mesorhizobium japonicum (strain LMG 29417 / CECT 9101 / MAFF 303099) (Mesorhizobium loti (strain MAFF 303099)).